Reading from the N-terminus, the 477-residue chain is Glycogen synthase (477 aa).

Residue lysine 15 participates in ADP-alpha-D-glucose binding.

The protein belongs to the glycosyltransferase 1 family. Bacterial/plant glycogen synthase subfamily.

The enzyme catalyses [(1-&gt;4)-alpha-D-glucosyl](n) + ADP-alpha-D-glucose = [(1-&gt;4)-alpha-D-glucosyl](n+1) + ADP + H(+). It functions in the pathway glycan biosynthesis; glycogen biosynthesis. In terms of biological role, synthesizes alpha-1,4-glucan chains using ADP-glucose. This Salmonella typhimurium (strain LT2 / SGSC1412 / ATCC 700720) protein is Glycogen synthase (glgA).